Consider the following 83-residue polypeptide: Small ribosomal subunit protein uS15c (83 aa).

This sequence belongs to the universal ribosomal protein uS15 family. As to quaternary structure, part of the 30S ribosomal subunit.

The protein resides in the plastid. It localises to the chloroplast. The chain is Small ribosomal subunit protein uS15c (rps15) from Fagopyrum esculentum subsp. ancestrale (Wild buckwheat).